Consider the following 80-residue polypeptide: Mitotic-spindle organizing protein 1 (80 aa).

This sequence belongs to the MOZART1 family. As to quaternary structure, part of the gamma-tubulin complex.

Its subcellular location is the cytoplasm. It localises to the cytoskeleton. The protein resides in the microtubule organizing center. It is found in the spindle pole body. Functionally, required for gamma-tubulin complex recruitment to the microtubule organizing center (MTOC). This Pyricularia oryzae (strain 70-15 / ATCC MYA-4617 / FGSC 8958) (Rice blast fungus) protein is Mitotic-spindle organizing protein 1.